A 484-amino-acid chain; its full sequence is Ankyrin repeat protein T5 (484 aa).

ANK repeat units lie at residues 33–64 (MDDT…DVNG), 68–102 (TRTS…DVNA), 106–138 (DGRY…LVCV), 142–173 (DGCG…SIHD), 178–211 (YGFN…NSSQ), 251–280 (LDFT…NPNV), and 284–313 (LGNS…TPDA).

This Rabbit fibroma virus (strain Kasza) (RFV) protein is Ankyrin repeat protein T5.